The following is a 237-amino-acid chain: Uracil-DNA glycosylase (237 aa).

Residue aspartate 77 is the Proton acceptor of the active site.

The protein belongs to the uracil-DNA glycosylase (UDG) superfamily. UNG family.

Its subcellular location is the cytoplasm. The enzyme catalyses Hydrolyzes single-stranded DNA or mismatched double-stranded DNA and polynucleotides, releasing free uracil.. Excises uracil residues from the DNA which can arise as a result of misincorporation of dUMP residues by DNA polymerase or due to deamination of cytosine. The chain is Uracil-DNA glycosylase from Acinetobacter baumannii (strain AB307-0294).